The following is a 182-amino-acid chain: Adenine phosphoribosyltransferase (182 aa).

The protein belongs to the purine/pyrimidine phosphoribosyltransferase family. Homodimer.

It localises to the cytoplasm. It catalyses the reaction AMP + diphosphate = 5-phospho-alpha-D-ribose 1-diphosphate + adenine. It participates in purine metabolism; AMP biosynthesis via salvage pathway; AMP from adenine: step 1/1. Functionally, catalyzes a salvage reaction resulting in the formation of AMP, that is energically less costly than de novo synthesis. The sequence is that of Adenine phosphoribosyltransferase from Pseudomonas fluorescens (strain SBW25).